A 213-amino-acid chain; its full sequence is Outer-membrane lipoprotein carrier protein (213 aa).

Residues 1 to 23 form the signal peptide; sequence MKKLLKQSLLGFALVSMTGAAFA.

Belongs to the LolA family. As to quaternary structure, monomer.

It is found in the periplasm. Participates in the translocation of lipoproteins from the inner membrane to the outer membrane. Only forms a complex with a lipoprotein if the residue after the N-terminal Cys is not an aspartate (The Asp acts as a targeting signal to indicate that the lipoprotein should stay in the inner membrane). The polypeptide is Outer-membrane lipoprotein carrier protein (Actinobacillus pleuropneumoniae serotype 7 (strain AP76)).